The chain runs to 151 residues: Allatostatin-A (151 aa).

The N-terminal stretch at 1-21 (MNSLHAHLLLLAVCCVGYIAS) is a signal peptide. Residues 22–54 (SPVIGQDQRSGDSDADVLLAADEMADNGGDNID) constitute a propeptide that is removed on maturation. Leucine amide is present on residues L64, L88, and L99. A propeptide spanning residues 103–135 (SDYDYDQDNEIDYRVPPANYLAAERAVRPGRQN) is cleaved from the precursor. The interval 131–151 (PGRQNKRTTRPQPFNFGLGRR) is disordered. L148 carries the post-translational modification Leucine amide.

Belongs to the allatostatin family.

It is found in the secreted. Its function is as follows. May act as a neurotransmitter or neuromodulator. This Drosophila melanogaster (Fruit fly) protein is Allatostatin-A (AstA).